We begin with the raw amino-acid sequence, 555 residues long: Serine/threonine-protein kinase AGC1-7 (555 aa).

The tract at residues 1 to 126 (MLTKPGKKLD…PSKPHTGGDI (126 aa)) is disordered. Basic and acidic residues-rich tracts occupy residues 7–16 (KKLDSSESTH) and 35–54 (PRKE…DNLI). Low complexity predominate over residues 84-118 (SQSNLNTKPNNNNSNNNSNMSSRSNSIESTSSNPS). One can recognise a Protein kinase domain in the interval 146–480 (FRLLKRLGYG…ATEIKQHPFF (335 aa)). Residues 152-160 (LGYGDIGSV) and Lys175 each bind ATP. The active-site Proton acceptor is the Asp271. An AGC-kinase C-terminal domain is found at 481-555 (EGVNWALIRS…DPDYIDFEYF (75 aa)). The interval 514-547 (AAVDGGGKKNNNGAGGGCSTGGGDNKPNGDCNDP) is disordered. Positions 526 to 537 (GAGGGCSTGGGD) are enriched in gly residues.

It belongs to the protein kinase superfamily. AGC Ser/Thr protein kinase family. As to quaternary structure, interacts with PDPK1/PDK1. In terms of processing, autophosphorylated and phosphorylated by PDPK1/PDK1. As to expression, specifically expressed in pollen grains.

Its subcellular location is the cytoplasm. It catalyses the reaction L-seryl-[protein] + ATP = O-phospho-L-seryl-[protein] + ADP + H(+). The catalysed reaction is L-threonyl-[protein] + ATP = O-phospho-L-threonyl-[protein] + ADP + H(+). Its activity is regulated as follows. Activated by PDPK1/PDK1. Functionally, functions redudantly with AGC1-5 as signaling component in the pollen tube. Required for polarized growth of pollen tubes. The sequence is that of Serine/threonine-protein kinase AGC1-7 from Arabidopsis thaliana (Mouse-ear cress).